A 788-amino-acid polypeptide reads, in one-letter code: Spastin (788 aa).

The disordered stretch occupies residues 1–105 (MVRTKNQSSS…PRSAGGPSSV (105 aa)). Over 1–116 (MVRTKNQSSS…KQNLYVVSFP (116 aa)) the chain is Cytoplasmic. The segment at 1 to 227 (MVRTKNQSSS…NRSGSGYSPG (227 aa)) is required for localization to punctate cytoplasmic foci. Low complexity-rich tracts occupy residues 8–48 (SSSS…SSHR) and 57–75 (ATNVSSSSNRRTTPGSSPD). The helical intramembrane region spans 117–137 (IIFLFNVLRSLIYQLFCIFRY). At 138–788 (LYGASTKVIY…WSSDYGDITI (651 aa)) the chain is on the cytoplasmic side. Positions 227 to 788 (GPGDPLLAKQ…WSSDYGDITI (562 aa)) are sufficient for interaction with microtubules and microtubule severing. The MIT domain maps to 240-315 (HRRAFEYISK…SMARDRLHFL (76 aa)). The segment covering 331–353 (EKQKANESREQQQKPQKAREAAD) has biased composition (basic and acidic residues). The interval 331-484 (EKQKANESRE…SGSGSGASTP (154 aa)) is disordered. Over residues 387 to 400 (ATATTPTSSSSLAS) the composition is skewed to low complexity. 2 stretches are compositionally biased toward polar residues: residues 419–433 (NKSQTLPRNLGSKTS) and 453–469 (QFSSGRNTPPQRSRTPI). The required for interaction with microtubules stretch occupies residues 471-485 (NNGASGSGSGASTPV). 553–560 (GPPGNGKT) contacts ATP.

It belongs to the AAA ATPase family. Spastin subfamily. As to quaternary structure, homohexamer. The homohexamer is stabilized by ATP-binding. The homohexamer may adopt a ring conformation through which microtubules pass prior to being severed. Interacts with microtubules. Interacts with atl; may be involved in microtubule dynamics.

Its subcellular location is the membrane. It is found in the cytoplasm. It localises to the cytoskeleton. The protein localises to the microtubule organizing center. The protein resides in the centrosome. Its subcellular location is the chromosome. It is found in the lipid droplet. The enzyme catalyses n ATP + n H2O + a microtubule = n ADP + n phosphate + (n+1) alpha/beta tubulin heterodimers.. ATP-dependent microtubule severing protein. Stimulates microtubule minus-end depolymerization and poleward microtubule flux in the mitotic spindle. Regulates microtubule stability in the neuromuscular junction synapse. Involved in lipid metabolism by regulating the size and distribution of lipid droplets. Involved in axon regeneration by regulating microtubule severing. This Drosophila persimilis (Fruit fly) protein is Spastin.